The following is a 476-amino-acid chain: Serine/threonine-protein kinase Chk1 (476 aa).

The Protein kinase domain maps to 9 to 265 (WDLVQTLGEG…IPDIKKDRWY (257 aa)). Residues 15–23 (LGEGAYGEV) and Lys-38 each bind ATP. The active-site Proton acceptor is Asp-130. The interval 272–329 (GTKRGRVSSGGVTESPGALPKHIRSDTDFSPVKSALGEDKASYSTSQPEPGTGGALWD) is disordered. Ser-280 is modified (phosphoserine; by PKB/AKT1). Ser-296 carries the post-translational modification Phosphoserine. Ser-317 bears the Phosphoserine; by ATM and ATR mark. The residue at position 345 (Ser-345) is a Phosphoserine. Residues 391–476 (RSLRDVCEKM…STQKVWLPPP (86 aa)) are autoinhibitory region.

This sequence belongs to the protein kinase superfamily. CAMK Ser/Thr protein kinase family. NIM1 subfamily. Post-translationally, phosphorylated by ATR in a RAD17-dependent manner in response to ultraviolet irradiation and inhibition of DNA replication. Phosphorylated by ATM in response to ionizing irradiation. Phosphorylation at Ser-345 induces a change in the conformation of the protein and activates the kinase activity. Phosphorylation at Ser-345 also increases binding to 14-3-3 proteins and promotes nuclear retention.

It localises to the nucleus. The protein localises to the chromosome. Its subcellular location is the cytoplasm. It is found in the cytoskeleton. The protein resides in the microtubule organizing center. It localises to the centrosome. It carries out the reaction L-seryl-[protein] + ATP = O-phospho-L-seryl-[protein] + ADP + H(+). The enzyme catalyses L-threonyl-[protein] + ATP = O-phospho-L-threonyl-[protein] + ADP + H(+). Its activity is regulated as follows. Activated through phosphorylation by atr or atm in response to DNA damage or inhibition of DNA replication. Its function is as follows. Serine/threonine-protein kinase which is required for checkpoint-mediated cell cycle arrest and activation of DNA repair in response to the presence of DNA damage or unreplicated DNA. May also negatively regulate cell cycle progression during unperturbed cell cycles. This regulation is achieved by a number of mechanisms that together help to preserve the integrity of the genome. Recognizes the substrate consensus sequence [R-X-X-S/T]. Binds to and phosphorylates CDC25A, CDC25B and CDC25C. This inhibits their activity through proteasomal degradation, nucleo-cytoplasmic shuttling and inhibition by proteins of the 13-3-3 family. Inhibition of CDC25 leads to increased inhibitory tyrosine phosphorylation of CDK-cyclin complexes and blocks cell cycle progression. May promote DNA repair, regulate chromatin assembly and the transcription of genes that regulate cell-cycle progression. May also play a role in replication fork maintenance. The polypeptide is Serine/threonine-protein kinase Chk1 (CHEK1) (Gallus gallus (Chicken)).